A 99-amino-acid chain; its full sequence is MICOS complex subunit MIC10 (99 aa).

The next 2 helical transmembrane spans lie at 27 to 43 (RFVY…LLFF) and 50 to 66 (WASI…SAYT).

Belongs to the MICOS complex subunit Mic10 family. As to quaternary structure, component of the mitochondrial contact site and cristae organizing system (MICOS) complex. The MICOS complex associates with mitochondrial outer membrane proteins. Present in a large lipid-enriched complex called mitochondrial transmembrane lipoprotein (MTL) complex made of proteins located in the two mitochondrial membranes, including the TOM complex and the core components of the MICOS complex and containing at least digalactosyldiacylglycerol (DGDG).

It is found in the mitochondrion inner membrane. Functionally, component of the MICOS complex, a large protein complex of the mitochondrial inner membrane that plays crucial roles in the maintenance of crista junctions, inner membrane architecture, and formation of contact sites to the outer membrane. This is MICOS complex subunit MIC10 from Arabidopsis thaliana (Mouse-ear cress).